The chain runs to 258 residues: Aspartate/glutamate leucyltransferase (258 aa).

Belongs to the R-transferase family. Bpt subfamily.

The protein localises to the cytoplasm. The catalysed reaction is N-terminal L-glutamyl-[protein] + L-leucyl-tRNA(Leu) = N-terminal L-leucyl-L-glutamyl-[protein] + tRNA(Leu) + H(+). It catalyses the reaction N-terminal L-aspartyl-[protein] + L-leucyl-tRNA(Leu) = N-terminal L-leucyl-L-aspartyl-[protein] + tRNA(Leu) + H(+). Functionally, functions in the N-end rule pathway of protein degradation where it conjugates Leu from its aminoacyl-tRNA to the N-termini of proteins containing an N-terminal aspartate or glutamate. The protein is Aspartate/glutamate leucyltransferase of Rhodopseudomonas palustris (strain TIE-1).